The sequence spans 202 residues: Imidazoleglycerol-phosphate dehydratase (202 aa).

It belongs to the imidazoleglycerol-phosphate dehydratase family.

Its subcellular location is the cytoplasm. It catalyses the reaction D-erythro-1-(imidazol-4-yl)glycerol 3-phosphate = 3-(imidazol-4-yl)-2-oxopropyl phosphate + H2O. Its pathway is amino-acid biosynthesis; L-histidine biosynthesis; L-histidine from 5-phospho-alpha-D-ribose 1-diphosphate: step 6/9. This is Imidazoleglycerol-phosphate dehydratase from Brucella suis (strain ATCC 23445 / NCTC 10510).